The following is a 107-amino-acid chain: Serine-rich and transmembrane domain-containing protein 1 (107 aa).

Residues 43-63 (IYVSIFLSLLAFLLLLLIIAL) form a helical membrane-spanning segment.

It is found in the membrane. This chain is Serine-rich and transmembrane domain-containing protein 1 (SERTM1), found in Homo sapiens (Human).